Here is a 99-residue protein sequence, read N- to C-terminus: Large ribosomal subunit protein bL27 (99 aa).

Positions 1–10 are excised as a propeptide; that stretch reads MKLIFDIQLF.

The protein belongs to the bacterial ribosomal protein bL27 family. In terms of processing, the N-terminus is cleaved by ribosomal processing cysteine protease Prp.

The chain is Large ribosomal subunit protein bL27 from Caldicellulosiruptor bescii (strain ATCC BAA-1888 / DSM 6725 / KCTC 15123 / Z-1320) (Anaerocellum thermophilum).